A 234-amino-acid chain; its full sequence is Sugar fermentation stimulation protein A (234 aa).

Positions 201–220 (LLSEAQQRGVEILAYKAEIS) form a DNA-binding region, H-T-H motif.

The protein belongs to the SfsA family.

Functionally, binds to DNA non-specifically. Could be a regulatory factor involved in maltose metabolism. In Shigella boydii serotype 4 (strain Sb227), this protein is Sugar fermentation stimulation protein A.